The sequence spans 147 residues: Ribosome-binding factor A (147 aa).

Residues 122 to 147 (QQQFGSVDDDVIENDIEESDDTEGKV) are disordered. Over residues 128–147 (VDDDVIENDIEESDDTEGKV) the composition is skewed to acidic residues.

This sequence belongs to the RbfA family. As to quaternary structure, monomer. Binds 30S ribosomal subunits, but not 50S ribosomal subunits or 70S ribosomes.

It is found in the cytoplasm. One of several proteins that assist in the late maturation steps of the functional core of the 30S ribosomal subunit. Associates with free 30S ribosomal subunits (but not with 30S subunits that are part of 70S ribosomes or polysomes). Required for efficient processing of 16S rRNA. May interact with the 5'-terminal helix region of 16S rRNA. The polypeptide is Ribosome-binding factor A (Shewanella oneidensis (strain ATCC 700550 / JCM 31522 / CIP 106686 / LMG 19005 / NCIMB 14063 / MR-1)).